The chain runs to 339 residues: Ketol-acid reductoisomerase (NADP(+)) (339 aa).

In terms of domain architecture, KARI N-terminal Rossmann spans 1-182 (MRVYYDRDAD…GGGRSGIIET (182 aa)). Residues 24-27 (YGSQ), R48, S51, T53, and 83-86 (DELQ) each bind NADP(+). H108 is a catalytic residue. G134 is a binding site for NADP(+). The region spanning 183–328 (SFREECETDL…EKLRAMMPWI (146 aa)) is the KARI C-terminal knotted domain. Residues D191, E195, E227, and E231 each contribute to the Mg(2+) site. S252 provides a ligand contact to substrate.

Belongs to the ketol-acid reductoisomerase family. Requires Mg(2+) as cofactor.

It catalyses the reaction (2R)-2,3-dihydroxy-3-methylbutanoate + NADP(+) = (2S)-2-acetolactate + NADPH + H(+). The enzyme catalyses (2R,3R)-2,3-dihydroxy-3-methylpentanoate + NADP(+) = (S)-2-ethyl-2-hydroxy-3-oxobutanoate + NADPH + H(+). It participates in amino-acid biosynthesis; L-isoleucine biosynthesis; L-isoleucine from 2-oxobutanoate: step 2/4. It functions in the pathway amino-acid biosynthesis; L-valine biosynthesis; L-valine from pyruvate: step 2/4. Functionally, involved in the biosynthesis of branched-chain amino acids (BCAA). Catalyzes an alkyl-migration followed by a ketol-acid reduction of (S)-2-acetolactate (S2AL) to yield (R)-2,3-dihydroxy-isovalerate. In the isomerase reaction, S2AL is rearranged via a Mg-dependent methyl migration to produce 3-hydroxy-3-methyl-2-ketobutyrate (HMKB). In the reductase reaction, this 2-ketoacid undergoes a metal-dependent reduction by NADPH to yield (R)-2,3-dihydroxy-isovalerate. The sequence is that of Ketol-acid reductoisomerase (NADP(+)) from Paramagnetospirillum magneticum (strain ATCC 700264 / AMB-1) (Magnetospirillum magneticum).